The primary structure comprises 373 residues: Probable tRNA sulfurtransferase (373 aa).

The THUMP domain maps to 54-158; the sequence is NKNIEELSKV…NDVAYFYYKI (105 aa). ATP-binding positions include 176-177, 201-202, Lys256, Gly278, and Gln287; these read LF and NF.

It belongs to the ThiI family.

The protein resides in the cytoplasm. It carries out the reaction [ThiI sulfur-carrier protein]-S-sulfanyl-L-cysteine + a uridine in tRNA + 2 reduced [2Fe-2S]-[ferredoxin] + ATP + H(+) = [ThiI sulfur-carrier protein]-L-cysteine + a 4-thiouridine in tRNA + 2 oxidized [2Fe-2S]-[ferredoxin] + AMP + diphosphate. The catalysed reaction is [ThiS sulfur-carrier protein]-C-terminal Gly-Gly-AMP + S-sulfanyl-L-cysteinyl-[cysteine desulfurase] + AH2 = [ThiS sulfur-carrier protein]-C-terminal-Gly-aminoethanethioate + L-cysteinyl-[cysteine desulfurase] + A + AMP + 2 H(+). It participates in cofactor biosynthesis; thiamine diphosphate biosynthesis. Functionally, catalyzes the ATP-dependent transfer of a sulfur to tRNA to produce 4-thiouridine in position 8 of tRNAs, which functions as a near-UV photosensor. Also catalyzes the transfer of sulfur to the sulfur carrier protein ThiS, forming ThiS-thiocarboxylate. This is a step in the synthesis of thiazole, in the thiamine biosynthesis pathway. The sulfur is donated as persulfide by IscS. This is Probable tRNA sulfurtransferase from Saccharolobus islandicus (strain L.S.2.15 / Lassen #1) (Sulfolobus islandicus).